Consider the following 176-residue polypeptide: ATP synthase subunit b (176 aa).

The chain crosses the membrane as a helical span at residues 26–45 (VINLAIIIGVLVYFGRGLLG).

Belongs to the ATPase B chain family. F-type ATPases have 2 components, F(1) - the catalytic core - and F(0) - the membrane proton channel. F(1) has five subunits: alpha(3), beta(3), gamma(1), delta(1), epsilon(1). F(0) has four main subunits: a(1), b(1), b'(1) and c(10-14). The alpha and beta chains form an alternating ring which encloses part of the gamma chain. F(1) is attached to F(0) by a central stalk formed by the gamma and epsilon chains, while a peripheral stalk is formed by the delta, b and b' chains.

Its subcellular location is the cellular thylakoid membrane. F(1)F(0) ATP synthase produces ATP from ADP in the presence of a proton or sodium gradient. F-type ATPases consist of two structural domains, F(1) containing the extramembraneous catalytic core and F(0) containing the membrane proton channel, linked together by a central stalk and a peripheral stalk. During catalysis, ATP synthesis in the catalytic domain of F(1) is coupled via a rotary mechanism of the central stalk subunits to proton translocation. In terms of biological role, component of the F(0) channel, it forms part of the peripheral stalk, linking F(1) to F(0). This is ATP synthase subunit b from Synechococcus sp. (strain PCC 6716).